The chain runs to 701 residues: DC-STAMP domain-containing protein 2 (701 aa).

4 helical membrane-spanning segments follow: residues 15–35 (TCGFTVGLSLATAFGLLELLG), 40–60 (PFGCLVTTVTLAAFLSLGMGF), 82–102 (LLLLVASFGLVLQGPCANTLQ), and 215–235 (FPHLCYALLPYKLLVCGLASL). Residues asparagine 272 and asparagine 284 are each glycosylated (N-linked (GlcNAc...) asparagine). A run of 2 helical transmembrane segments spans residues 310-330 (ALSLMGYTMPLLIGFLYIQAL) and 404-424 (LLIMLLLVFLDYGVFWLLDLA). N-linked (GlcNAc...) asparagine glycosylation occurs at asparagine 468. Residues 488-508 (YIVIGTMYGLCFFVTLFGSYV) form a helical membrane-spanning segment. Residues 673-701 (LQEALGTNLSDKSTSKPERAGNRNQDRKQ) are disordered. Basic and acidic residues predominate over residues 685–701 (STSKPERAGNRNQDRKQ).

Interacts with DCST1. As to expression, expressed in testis.

The protein localises to the cytoplasmic vesicle. Its subcellular location is the secretory vesicle. It is found in the acrosome membrane. Essential sperm cell-surface protein required for sperm-egg fusion and fertilization. In Mus musculus (Mouse), this protein is DC-STAMP domain-containing protein 2.